Here is a 464-residue protein sequence, read N- to C-terminus: 3-isopropylmalate dehydratase large subunit (464 aa).

3 residues coordinate [4Fe-4S] cluster: Cys-337, Cys-397, and Cys-400.

This sequence belongs to the aconitase/IPM isomerase family. LeuC type 1 subfamily. Heterodimer of LeuC and LeuD. It depends on [4Fe-4S] cluster as a cofactor.

The enzyme catalyses (2R,3S)-3-isopropylmalate = (2S)-2-isopropylmalate. It participates in amino-acid biosynthesis; L-leucine biosynthesis; L-leucine from 3-methyl-2-oxobutanoate: step 2/4. Its function is as follows. Catalyzes the isomerization between 2-isopropylmalate and 3-isopropylmalate, via the formation of 2-isopropylmaleate. The protein is 3-isopropylmalate dehydratase large subunit of Bacillus cereus (strain ZK / E33L).